The following is a 377-amino-acid chain: Chaperone protein DnaJ (377 aa).

In terms of domain architecture, J spans 6–70; that stretch reads DYYKILGIDK…EKKAIYDKYG (65 aa). Residues 143–225 form a CR-type zinc finger; that stretch reads GRVISQKLDK…CKGAKKIKES (83 aa). The Zn(2+) site is built by Cys156, Cys159, Cys173, Cys176, Cys199, Cys202, Cys213, and Cys216. CXXCXGXG motif repeat units lie at residues 156–163, 173–180, 199–206, and 213–220; these read CESCNGTG, CSTCNGRG, CSTCNGLG, and CPSCKGAK.

This sequence belongs to the DnaJ family. In terms of assembly, homodimer. The cofactor is Zn(2+).

It localises to the cytoplasm. In terms of biological role, participates actively in the response to hyperosmotic and heat shock by preventing the aggregation of stress-denatured proteins and by disaggregating proteins, also in an autonomous, DnaK-independent fashion. Unfolded proteins bind initially to DnaJ; upon interaction with the DnaJ-bound protein, DnaK hydrolyzes its bound ATP, resulting in the formation of a stable complex. GrpE releases ADP from DnaK; ATP binding to DnaK triggers the release of the substrate protein, thus completing the reaction cycle. Several rounds of ATP-dependent interactions between DnaJ, DnaK and GrpE are required for fully efficient folding. Also involved, together with DnaK and GrpE, in the DNA replication of plasmids through activation of initiation proteins. This is Chaperone protein DnaJ from Mycoplasmopsis pulmonis (strain UAB CTIP) (Mycoplasma pulmonis).